The primary structure comprises 428 residues: Ribulose bisphosphate carboxylase (428 aa).

K151 serves as the catalytic Proton acceptor. Position 153 (K153) interacts with substrate. Mg(2+) is bound by residues K177, D179, and E180. At K177 the chain carries N6-carboxylysine. H270 (proton acceptor) is an active-site residue. Substrate contacts are provided by residues R271, H303, 354-356 (SGG), and 376-379 (QFGG).

The protein belongs to the RuBisCO large chain family. Type III subfamily. In terms of assembly, homodimer. In contrast to form I RuBisCO, the form III RuBisCO is composed solely of large subunits. Requires Mg(2+) as cofactor.

It carries out the reaction 2 (2R)-3-phosphoglycerate + 2 H(+) = D-ribulose 1,5-bisphosphate + CO2 + H2O. It catalyses the reaction D-ribulose 1,5-bisphosphate + O2 = 2-phosphoglycolate + (2R)-3-phosphoglycerate + 2 H(+). Its activity is regulated as follows. Reversibly inhibited by O(2). Functionally, catalyzes the addition of molecular CO(2) and H(2)O to ribulose 1,5-bisphosphate (RuBP), generating two molecules of 3-phosphoglycerate (3-PGA). Functions in an archaeal AMP degradation pathway, together with AMP phosphorylase and R15P isomerase. In Methanosarcina acetivorans (strain ATCC 35395 / DSM 2834 / JCM 12185 / C2A), this protein is Ribulose bisphosphate carboxylase.